A 225-amino-acid chain; its full sequence is tRNA (guanine-N(1)-)-methyltransferase (225 aa).

S-adenosyl-L-methionine is bound by residues Gly-112 and 132–137 (IGDYVL).

Belongs to the RNA methyltransferase TrmD family. As to quaternary structure, homodimer.

It localises to the cytoplasm. The catalysed reaction is guanosine(37) in tRNA + S-adenosyl-L-methionine = N(1)-methylguanosine(37) in tRNA + S-adenosyl-L-homocysteine + H(+). Its function is as follows. Specifically methylates guanosine-37 in various tRNAs. In Bacteroides fragilis (strain ATCC 25285 / DSM 2151 / CCUG 4856 / JCM 11019 / LMG 10263 / NCTC 9343 / Onslow / VPI 2553 / EN-2), this protein is tRNA (guanine-N(1)-)-methyltransferase.